The primary structure comprises 417 residues: Serine hydroxymethyltransferase (417 aa).

(6S)-5,6,7,8-tetrahydrofolate-binding positions include leucine 121 and 125–127 (GHL). Lysine 229 carries the post-translational modification N6-(pyridoxal phosphate)lysine. (6S)-5,6,7,8-tetrahydrofolate is bound at residue 354–356 (SPF).

Belongs to the SHMT family. Homodimer. Requires pyridoxal 5'-phosphate as cofactor.

The protein localises to the cytoplasm. It catalyses the reaction (6R)-5,10-methylene-5,6,7,8-tetrahydrofolate + glycine + H2O = (6S)-5,6,7,8-tetrahydrofolate + L-serine. The protein operates within one-carbon metabolism; tetrahydrofolate interconversion. Its pathway is amino-acid biosynthesis; glycine biosynthesis; glycine from L-serine: step 1/1. Functionally, catalyzes the reversible interconversion of serine and glycine with tetrahydrofolate (THF) serving as the one-carbon carrier. This reaction serves as the major source of one-carbon groups required for the biosynthesis of purines, thymidylate, methionine, and other important biomolecules. Also exhibits THF-independent aldolase activity toward beta-hydroxyamino acids, producing glycine and aldehydes, via a retro-aldol mechanism. The protein is Serine hydroxymethyltransferase of Stutzerimonas stutzeri (strain A1501) (Pseudomonas stutzeri).